A 535-amino-acid polypeptide reads, in one-letter code: Bifunctional purine biosynthesis protein PurH (535 aa).

In terms of domain architecture, MGS-like spans threonine 6–valine 151.

It belongs to the PurH family.

It carries out the reaction (6R)-10-formyltetrahydrofolate + 5-amino-1-(5-phospho-beta-D-ribosyl)imidazole-4-carboxamide = 5-formamido-1-(5-phospho-D-ribosyl)imidazole-4-carboxamide + (6S)-5,6,7,8-tetrahydrofolate. The catalysed reaction is IMP + H2O = 5-formamido-1-(5-phospho-D-ribosyl)imidazole-4-carboxamide. Its pathway is purine metabolism; IMP biosynthesis via de novo pathway; 5-formamido-1-(5-phospho-D-ribosyl)imidazole-4-carboxamide from 5-amino-1-(5-phospho-D-ribosyl)imidazole-4-carboxamide (10-formyl THF route): step 1/1. The protein operates within purine metabolism; IMP biosynthesis via de novo pathway; IMP from 5-formamido-1-(5-phospho-D-ribosyl)imidazole-4-carboxamide: step 1/1. This Pseudomonas fluorescens (strain ATCC BAA-477 / NRRL B-23932 / Pf-5) protein is Bifunctional purine biosynthesis protein PurH.